The following is a 371-amino-acid chain: Epoxyqueuosine reductase (371 aa).

The Proton donor role is filled by Asp137. The 33-residue stretch at 179 to 211 folds into the 4Fe-4S ferredoxin-type domain; the sequence is IPLPVDTPVENQCGKCTACISSCPTNAILENGV. 8 residues coordinate [4Fe-4S] cluster: Cys191, Cys194, Cys197, Cys201, Cys217, Cys244, Cys247, and Cys251.

The protein belongs to the QueG family. Monomer. Requires cob(II)alamin as cofactor. The cofactor is [4Fe-4S] cluster.

It is found in the cytoplasm. It catalyses the reaction epoxyqueuosine(34) in tRNA + AH2 = queuosine(34) in tRNA + A + H2O. It participates in tRNA modification; tRNA-queuosine biosynthesis. Functionally, catalyzes the conversion of epoxyqueuosine (oQ) to queuosine (Q), which is a hypermodified base found in the wobble positions of tRNA(Asp), tRNA(Asn), tRNA(His) and tRNA(Tyr). This is Epoxyqueuosine reductase from Aliivibrio fischeri (strain ATCC 700601 / ES114) (Vibrio fischeri).